The following is a 290-amino-acid chain: UPF0761 membrane protein Ent638_4092 (290 aa).

The next 6 membrane-spanning stretches (helical) occupy residues Leu44–Phe64, Val104–Leu124, Phe140–Ile160, Ile183–Leu203, Ala210–Leu230, and Val244–Leu264.

This sequence belongs to the UPF0761 family.

It localises to the cell inner membrane. This Enterobacter sp. (strain 638) protein is UPF0761 membrane protein Ent638_4092.